The primary structure comprises 212 residues: Thymidylate kinase (212 aa).

Residue 10–17 (GLEGAGKT) coordinates ATP.

This sequence belongs to the thymidylate kinase family.

The catalysed reaction is dTMP + ATP = dTDP + ADP. In terms of biological role, phosphorylation of dTMP to form dTDP in both de novo and salvage pathways of dTTP synthesis. The chain is Thymidylate kinase from Cronobacter sakazakii (strain ATCC BAA-894) (Enterobacter sakazakii).